The chain runs to 157 residues: MNKITINLNLNGEARSIVTEPNKRLLDLLREDFGLTSVKEGCSEGECGACTVIFNGDPVTTCCMLAGQADESTIITLEGVAEDGKPSLLQQCFLEAGAVQCGYCTPGMILTAKALLDKNPDPTDEEITVAMSGNLCRCTGYIKIHAAVRYAVERCAN.

The 2Fe-2S ferredoxin-type domain maps to 4-80; it reads ITINLNLNGE…ESTIITLEGV (77 aa). [2Fe-2S] cluster-binding residues include Cys-42, Cys-47, Cys-50, Cys-62, Cys-101, Cys-104, Cys-136, and Cys-138.

In terms of assembly, heterooctamer of NDHM, NDHL, NDHS and NDHF. Dimer of heterotetramers. Requires [2Fe-2S] cluster as cofactor.

The enzyme catalyses nicotinate + NADP(+) + H2O = 6-hydroxynicotinate + NADPH + H(+). The protein operates within cofactor degradation; nicotinate degradation; 6-hydroxynicotinate from nicotinate: step 1/1. With respect to regulation, reversibly inactivated by selenide and sulfide. Not inhibited by cyanide. In terms of biological role, catalyzes the hydroxylation of nicotinate to 6-hydroxynicotinate. Also active against 2-pyrazinecarboxylic acid, but inactive against other nicotinate analogs. The protein is Nicotinate dehydrogenase small FeS subunit (ndhS) of Eubacterium barkeri (Clostridium barkeri).